The primary structure comprises 363 residues: Large ribosomal subunit protein uL4 (363 aa).

Belongs to the universal ribosomal protein uL4 family. Component of the large ribosomal subunit. Mature ribosomes consist of a small (40S) and a large (60S) subunit. The 40S subunit contains about 32 different proteins and 1 molecule of RNA (18S). The 60S subunit contains 45 different proteins and 3 molecules of RNA (25S, 5.8S and 5S).

The protein resides in the cytoplasm. Functionally, component of the ribosome, a large ribonucleoprotein complex responsible for the synthesis of proteins in the cell. The small ribosomal subunit (SSU) binds messenger RNAs (mRNAs) and translates the encoded message by selecting cognate aminoacyl-transfer RNA (tRNA) molecules. The large subunit (LSU) contains the ribosomal catalytic site termed the peptidyl transferase center (PTC), which catalyzes the formation of peptide bonds, thereby polymerizing the amino acids delivered by tRNAs into a polypeptide chain. The nascent polypeptides leave the ribosome through a tunnel in the LSU and interact with protein factors that function in enzymatic processing, targeting, and the membrane insertion of nascent chains at the exit of the ribosomal tunnel. The protein is Large ribosomal subunit protein uL4 of Candida albicans (strain SC5314 / ATCC MYA-2876) (Yeast).